Here is a 475-residue protein sequence, read N- to C-terminus: Sulfate adenylyltransferase subunit 1 (475 aa).

The region spanning 25-239 is the tr-type G domain; the sequence is KSLLRFLTCG…EVLETVEIQR (215 aa). The tract at residues 34–41 is G1; sequence GSVDDGKS. Position 34 to 41 (34 to 41) interacts with GTP; the sequence is GSVDDGKS. Residues 92–96 are G2; it reads GITID. Residues 113–116 are G3; it reads DTPG. Residues 113-117 and 168-171 each bind GTP; these read DTPGH and NKMD. The interval 168–171 is G4; it reads NKMD. A G5 region spans residues 206 to 208; that stretch reads SAL.

The protein belongs to the TRAFAC class translation factor GTPase superfamily. Classic translation factor GTPase family. CysN/NodQ subfamily. As to quaternary structure, heterodimer composed of CysD, the smaller subunit, and CysN.

The catalysed reaction is sulfate + ATP + H(+) = adenosine 5'-phosphosulfate + diphosphate. The protein operates within sulfur metabolism; hydrogen sulfide biosynthesis; sulfite from sulfate: step 1/3. Functionally, with CysD forms the ATP sulfurylase (ATPS) that catalyzes the adenylation of sulfate producing adenosine 5'-phosphosulfate (APS) and diphosphate, the first enzymatic step in sulfur assimilation pathway. APS synthesis involves the formation of a high-energy phosphoric-sulfuric acid anhydride bond driven by GTP hydrolysis by CysN coupled to ATP hydrolysis by CysD. This chain is Sulfate adenylyltransferase subunit 1, found in Citrobacter koseri (strain ATCC BAA-895 / CDC 4225-83 / SGSC4696).